Consider the following 1098-residue polypeptide: Early transcription factor large subunit homolog (1098 aa).

One can recognise a Helicase ATP-binding domain in the interval 17-317 (KGGRAFFPCD…PNGQPLQRQQ (301 aa)). Position 64–71 (64–71 (WQTGTGKS)) interacts with ATP. Positions 246 to 249 (DEIH) match the DEAH box motif. The Helicase C-terminal domain maps to 489 to 689 (MMKDILSIIR…EGDKALRKHA (201 aa)).

This sequence belongs to the DEAD box helicase family. DEAH subfamily.

It is found in the virion. It catalyses the reaction ATP + H2O = ADP + phosphate + H(+). Its function is as follows. Putative initation factor. In African swine fever virus (isolate Tick/Malawi/Lil 20-1/1983) (ASFV), this protein is Early transcription factor large subunit homolog.